Consider the following 530-residue polypeptide: Developmental and secondary metabolism regulator VEL1 (530 aa).

A Velvet domain is found at 26–220; the sequence is NRSLWYQMTV…ADQGCQVRIR (195 aa). Residues 40 to 45 carry the Nuclear localization signal motif; it reads ERARAC. A disordered region spans residues 206 to 516; it reads LSKTVADQGC…HDQGWYSRAD (311 aa). A compositionally biased stretch (basic and acidic residues) spans 244-253; that stretch reads FERREEDFGR. Residues 295 to 305 show a composition bias toward pro residues; that stretch reads YPPPPPPPSYE. Positions 347–356 are enriched in polar residues; sequence YAPTAQSPYS. Residues 380–389 are compositionally biased toward basic and acidic residues; it reads VKHDLYDRRQ. The span at 390-404 shows a compositional bias: low complexity; sequence STSSYVPPSPSVYST. The segment covering 415–426 has biased composition (pro residues); it reads SYPPTPVAAPRP. The segment at 429-460 is PEST; sequence MHSQTSLPALKIDQLVSPVSPLPPIEPQTGPA. A compositionally biased stretch (polar residues) spans 478 to 490; it reads FAQSTRPLHNGQR.

Belongs to the velvet family. VeA subfamily. Component of the heterotrimeric velvet complex composed of LAE1, VEL1 and VEL2; VEL1 acting as a bridging protein between LAE1 and VEL2. Interacts with LAE1.

It localises to the nucleus. The protein resides in the cytoplasm. In terms of biological role, component of the velvet transcription factor complex that controls sexual/asexual developmental ratio in response to light, promoting sexual development in the darkness while stimulating asexual sporulation under illumination. The velvet complex hat acts as a global regulator for secondary metabolite gene expression. Controls positively the expression of the gibberellins, fumonisins and fusarin C gene clusters. Controls the expression of the fusaric acid gene cluster. Controls negatively the expression of the bikaverin gene cluster. Regulates the expression of laeA. Plays a crucial role in virulence. This is Developmental and secondary metabolism regulator VEL1 from Gibberella fujikuroi (strain CBS 195.34 / IMI 58289 / NRRL A-6831) (Bakanae and foot rot disease fungus).